Reading from the N-terminus, the 227-residue chain is Large ribosomal subunit protein uL3 (227 aa).

Belongs to the universal ribosomal protein uL3 family. In terms of assembly, part of the 50S ribosomal subunit. Forms a cluster with proteins L14 and L19.

Its function is as follows. One of the primary rRNA binding proteins, it binds directly near the 3'-end of the 23S rRNA, where it nucleates assembly of the 50S subunit. In Leuconostoc citreum (strain KM20), this protein is Large ribosomal subunit protein uL3.